We begin with the raw amino-acid sequence, 522 residues long: Amine oxidase [flavin-containing] (522 aa).

At 1 to 492 (MTAQNTFDVI…FWERNLPSVG (492 aa)) the chain is on the cytoplasmic side. Cys-399 is subject to S-8alpha-FAD cysteine. The helical; Anchor for type IV membrane protein transmembrane segment at 493–513 (GFINFLAASVLSVATAAGMLA) threads the bilayer. At 514–522 (YQKGLLTRS) the chain is on the mitochondrial intermembrane side.

Belongs to the flavin monoamine oxidase family. FAD is required as a cofactor.

Its subcellular location is the mitochondrion outer membrane. It carries out the reaction a secondary aliphatic amine + O2 + H2O = a primary amine + an aldehyde + H2O2. Its function is as follows. Catalyzes the oxidative deamination of biogenic and xenobiotic amines and has important functions in the metabolism of neuroactive and vasoactive amines in the central nervous system and peripheral tissues. Oxidizes both 5-hydroxytryptamine (5-HT) and beta-phenylethylamine (PEA). The chain is Amine oxidase [flavin-containing] (mao) from Oncorhynchus mykiss (Rainbow trout).